The primary structure comprises 120 residues: Large ribosomal subunit protein uL18 (120 aa).

Positions 1–10 are enriched in basic and acidic residues; sequence MKLNRVESTR. Residues 1–26 are disordered; sequence MKLNRVESTRSRHRRVRRKVGGTGDR. Basic residues predominate over residues 11–20; the sequence is SRHRRVRRKV.

This sequence belongs to the universal ribosomal protein uL18 family. As to quaternary structure, part of the 50S ribosomal subunit; part of the 5S rRNA/L5/L18/L25 subcomplex. Contacts the 5S and 23S rRNAs.

This is one of the proteins that bind and probably mediate the attachment of the 5S RNA into the large ribosomal subunit, where it forms part of the central protuberance. This is Large ribosomal subunit protein uL18 from Cyanothece sp. (strain PCC 7425 / ATCC 29141).